The primary structure comprises 49 residues: Large ribosomal subunit protein bL33B (49 aa).

The protein belongs to the bacterial ribosomal protein bL33 family.

The sequence is that of Large ribosomal subunit protein bL33B from Bacillus pumilus (strain SAFR-032).